The chain runs to 204 residues: Holliday junction branch migration complex subunit RuvA (204 aa).

The domain I stretch occupies residues 1 to 64; that stretch reads MIAKLTGILD…ETDQRLIGFT (64 aa). The tract at residues 65–143 is domain II; the sequence is SAGERAWFRL…GLAGYASPVG (79 aa). The flexible linker stretch occupies residues 144-154; it reads PGGEAFVAPPG. A domain III region spans residues 154–204; sequence GNASADAVSALQNLGFKPAVASSAVAAAVKELGEDAGLNDLVRVALKRAAG.

This sequence belongs to the RuvA family. Homotetramer. Forms an RuvA(8)-RuvB(12)-Holliday junction (HJ) complex. HJ DNA is sandwiched between 2 RuvA tetramers; dsDNA enters through RuvA and exits via RuvB. An RuvB hexamer assembles on each DNA strand where it exits the tetramer. Each RuvB hexamer is contacted by two RuvA subunits (via domain III) on 2 adjacent RuvB subunits; this complex drives branch migration. In the full resolvosome a probable DNA-RuvA(4)-RuvB(12)-RuvC(2) complex forms which resolves the HJ.

The protein localises to the cytoplasm. The RuvA-RuvB-RuvC complex processes Holliday junction (HJ) DNA during genetic recombination and DNA repair, while the RuvA-RuvB complex plays an important role in the rescue of blocked DNA replication forks via replication fork reversal (RFR). RuvA specifically binds to HJ cruciform DNA, conferring on it an open structure. The RuvB hexamer acts as an ATP-dependent pump, pulling dsDNA into and through the RuvAB complex. HJ branch migration allows RuvC to scan DNA until it finds its consensus sequence, where it cleaves and resolves the cruciform DNA. The polypeptide is Holliday junction branch migration complex subunit RuvA (Novosphingobium aromaticivorans (strain ATCC 700278 / DSM 12444 / CCUG 56034 / CIP 105152 / NBRC 16084 / F199)).